The sequence spans 251 residues: UPF0309 protein SAV_3856 (251 aa).

The SIS domain occupies 36–220 (IADTVADGGR…AGTLADRGIE (185 aa)).

The protein belongs to the UPF0309 family.

The chain is UPF0309 protein SAV_3856 from Streptomyces avermitilis (strain ATCC 31267 / DSM 46492 / JCM 5070 / NBRC 14893 / NCIMB 12804 / NRRL 8165 / MA-4680).